The following is a 523-amino-acid chain: Sensory neuron membrane protein 1 (523 aa).

Topologically, residues 1 to 11 are cytoplasmic; sequence MQLPKELKYAA. A helical transmembrane segment spans residues 12–32; it reads IAGGVALFGLIFGWVLFPTIL. Over 33-458 the chain is Extracellular; the sequence is KSQLKKEMAL…HQLFIPKRVV (426 aa). N67 and N229 each carry an N-linked (GlcNAc...) asparagine glycan. 3 cysteine pairs are disulfide-bonded: C268–C333, C297–C352, and C335–C341. N440 is a glycosylation site (N-linked (GlcNAc...) asparagine). Residues 459 to 479 form a helical membrane-spanning segment; sequence GVLRWWVVSFGSLGAVIGIVF. Topologically, residues 480–523 are cytoplasmic; the sequence is HFRDHIMRLAVSGDTKVSKVTPEEPEQKDISVIGQAQEPAKVNI.

This sequence belongs to the CD36 family. In terms of tissue distribution, detected in sensory neurons in the antenna.

Its subcellular location is the cell membrane. In terms of biological role, plays an olfactory role that is not restricted to pheromone sensitivity. The protein is Sensory neuron membrane protein 1 of Heliothis virescens (Tobacco budworm moth).